Consider the following 217-residue polypeptide: Adr-2-binding protein 1 (217 aa).

A disordered region spans residues 33 to 65; the sequence is ARPEPQHDSLKRRNTTSSIAKKKAKMTRGDEQI. The span at 44-58 shows a compositional bias: basic residues; that stretch reads RRNTTSSIAKKKAKM.

In terms of assembly, interacts with double-stranded RNA-specific adenosine deaminase adr-2. Expressed in main body hypodermal cells, the hypodermal seam cells, pharynx, intestine and some neurons.

It is found in the nucleus. In terms of biological role, required for the A-I editing activity of the double-stranded RNA-specific adenosine deaminase adr-2 by facilitating adr-2 nuclear localization. The chain is Adr-2-binding protein 1 from Caenorhabditis elegans.